The sequence spans 20 residues: 23 kDa cell wall protein (20 aa).

The protein localises to the secreted. The protein resides in the cell wall. The polypeptide is 23 kDa cell wall protein (Solanum lycopersicum (Tomato)).